Reading from the N-terminus, the 790-residue chain is Spermatogenesis-associated protein 20 (790 aa).

Residues 1–19 (MSHHSSPPPKHKGEHKGHG) show a composition bias toward basic residues. Residues 1-67 (MSHHSSPPPK…PPPAPPKTVN (67 aa)) are disordered. Serine 5 carries the post-translational modification Phosphoserine. Positions 23 to 36 (GSERGSSSRDKDRS) are enriched in basic and acidic residues. The residue at position 653 (serine 653) is a Phosphoserine.

It localises to the secreted. Functionally, may play a role in fertility regulation. In Mus musculus (Mouse), this protein is Spermatogenesis-associated protein 20 (Spata20).